A 183-amino-acid polypeptide reads, in one-letter code: uncharacterized protein (183 aa).

This is an uncharacterized protein from Acanthamoeba polyphaga mimivirus (APMV).